The primary structure comprises 427 residues: Adenylosuccinate synthetase (427 aa).

Residues G12–K18 and G40–T42 contribute to the GTP site. Residue D13 is the Proton acceptor of the active site. Residues D13 and G40 each contribute to the Mg(2+) site. Residues D13–K16, N38–H41, T128, R142, Q223, T238, and R302 contribute to the IMP site. Catalysis depends on H41, which acts as the Proton donor. A substrate-binding site is contributed by T298–R304. GTP is bound by residues R304, S330–D332, and S412–G414.

The protein belongs to the adenylosuccinate synthetase family. As to quaternary structure, homodimer. Requires Mg(2+) as cofactor.

The protein resides in the cytoplasm. It carries out the reaction IMP + L-aspartate + GTP = N(6)-(1,2-dicarboxyethyl)-AMP + GDP + phosphate + 2 H(+). It functions in the pathway purine metabolism; AMP biosynthesis via de novo pathway; AMP from IMP: step 1/2. Its function is as follows. Plays an important role in the de novo pathway of purine nucleotide biosynthesis. Catalyzes the first committed step in the biosynthesis of AMP from IMP. This is Adenylosuccinate synthetase from Staphylococcus saprophyticus subsp. saprophyticus (strain ATCC 15305 / DSM 20229 / NCIMB 8711 / NCTC 7292 / S-41).